Reading from the N-terminus, the 462-residue chain is Dipeptidyl peptidase 1 (462 aa).

A signal peptide spans 1–24 (MGPWTHSLRAVLLLVLLGVCTVRS). Asn29 and Asn53 each carry an N-linked (GlcNAc...) asparagine glycan. 5 disulfide bridges follow: Cys30-Cys118, Cys54-Cys136, Cys254-Cys297, Cys290-Cys330, and Cys320-Cys336. Positions 135–230 (ACFVGKKVES…DEIQQQILNL (96 aa)) are excised as a propeptide. The active site involves Cys257. A glycan (N-linked (GlcNAc...) asparagine) is linked at Asn275. Residues Phe301 and Tyr303 each coordinate chloride. Tyr346 is a binding site for chloride. Catalysis depends on residues His404 and Asn426.

This sequence belongs to the peptidase C1 family. As to quaternary structure, tetramer of heterotrimers consisting of exclusion domain, heavy- and light chains. Chloride serves as cofactor. Broadly distributed, but higher levels found in lung, liver, kidney and spleen. Lower levels found in testis and brain.

Its subcellular location is the lysosome. It carries out the reaction Release of an N-terminal dipeptide, Xaa-Yaa-|-Zaa-, except when Xaa is Arg or Lys, or Yaa or Zaa is Pro.. In terms of biological role, thiol protease. Has dipeptidylpeptidase activity. Active against a broad range of dipeptide substrates composed of both polar and hydrophobic amino acids. Proline cannot occupy the P1 position and arginine cannot occupy the P2 position of the substrate. Can act as both an exopeptidase and endopeptidase. Activates serine proteases such as elastase, cathepsin G and granzymes A and B. In Mus musculus (Mouse), this protein is Dipeptidyl peptidase 1 (Ctsc).